Here is a 90-residue protein sequence, read N- to C-terminus: Translation initiation factor IF-1 (90 aa).

One can recognise an S1-like domain in the interval 15–90; that stretch reads KKQKRKKEEV…TLGRIVFRHK (76 aa).

The protein belongs to the IF-1 family. As to quaternary structure, component of the 30S ribosomal translation pre-initiation complex which assembles on the 30S ribosome in the order IF-2 and IF-3, IF-1 and N-formylmethionyl-tRNA(fMet); mRNA recruitment can occur at any time during PIC assembly.

The protein resides in the cytoplasm. Its function is as follows. One of the essential components for the initiation of protein synthesis. Stabilizes the binding of IF-2 and IF-3 on the 30S subunit to which N-formylmethionyl-tRNA(fMet) subsequently binds. Helps modulate mRNA selection, yielding the 30S pre-initiation complex (PIC). Upon addition of the 50S ribosomal subunit IF-1, IF-2 and IF-3 are released leaving the mature 70S translation initiation complex. This is Translation initiation factor IF-1 from Mycoplasma sp.